A 700-amino-acid chain; its full sequence is Eukaryotic peptide chain release factor GTP-binding subunit (700 aa).

The several sort of repeats stretch occupies residues 10-136; the sequence is GQGQGYNQYN…YAAPAQSSSQ (127 aa). A compositionally biased stretch (low complexity) spans 114–123; sequence QGAQGYNAQQ. Positions 114-250 are disordered; sequence QGAQGYNAQQ…TSTGGANSVD (137 aa). Residues 131–151 show a composition bias toward polar residues; that stretch reads AQSSSQGMTLKDFQNQQGSTN. Residues 137–267 are charged; the sequence is GMTLKDFQNQ…DEVDEEVVKD (131 aa). 2 stretches are compositionally biased toward basic and acidic residues: residues 179–194 and 204–221; these read KTEK…KTTD and PKID…KTKE. A compositionally biased stretch (polar residues) spans 222 to 246; the sequence is NTPSADDTSSEKTTSAKADTSTGGA. In terms of domain architecture, tr-type G spans 272–498; sequence KDHVSIIFMG…YLDNMKTTDR (227 aa). The segment at 281–288 is G1; it reads GHVDAGKS. 281-288 lines the GTP pocket; the sequence is GHVDAGKS. Positions 337 to 341 are G2; it reads GKTIE. Threonine 355 bears the Phosphothreonine mark. Positions 358-361 are G3; it reads DAPG. Residues 358-362 and 420-423 each bind GTP; these read DAPGH and NKMD. The G4 stretch occupies residues 420–423; it reads NKMD. A G5 region spans residues 462 to 464; sequence SGY.

The protein belongs to the TRAFAC class translation factor GTPase superfamily. Classic translation factor GTPase family. ERF3 subfamily.

Its subcellular location is the cytoplasm. In terms of biological role, involved in translation termination. Stimulates the activity of ERF1. Binds guanine nucleotides. In Kluyveromyces lactis (strain ATCC 8585 / CBS 2359 / DSM 70799 / NBRC 1267 / NRRL Y-1140 / WM37) (Yeast), this protein is Eukaryotic peptide chain release factor GTP-binding subunit (SUP35).